Here is a 1015-residue protein sequence, read N- to C-terminus: DNA ligase 3 (1015 aa).

A PARP-type zinc finger spans residues Phe94 to Ser186. 4 residues coordinate Zn(2+): Cys106, Cys109, His140, and Cys143. Residues Ser211, Ser217, Ser228, and Ser244 each carry the phosphoserine modification. The disordered stretch occupies residues Gly229–Lys255. Positions Lys234–Ala253 are enriched in polar residues. Interaction with DNA stretches follow at residues Pro279–Asn282, Val323–Asp328, Thr393–Asp396, and Lys426–Lys432. Residue Glu511 participates in ATP binding. The active-site N6-AMP-lysine intermediate is the Lys513. Arg518 and Arg533 together coordinate ATP. Mg(2+) contacts are provided by Glu565 and Glu660. ATP-binding residues include Lys665, Arg676, and Lys680. Residues Asp849 to Lys926 are disordered. A compositionally biased stretch (low complexity) spans Thr854 to Lys884. Ser919 carries the phosphoserine modification. A BRCT domain is found at Val939–Cys1015.

The protein belongs to the ATP-dependent DNA ligase family. As to quaternary structure, isoform 3 interacts (via BRCT domain) with the nuclear DNA-repair protein XRCC1. Interacts with POLG. Interacts with POLB. It depends on Mg(2+) as a cofactor. In terms of tissue distribution, the alpha isoform is expressed in all tissues, while the beta isoform is expressed only in the testis.

Its subcellular location is the nucleus. It catalyses the reaction ATP + (deoxyribonucleotide)n-3'-hydroxyl + 5'-phospho-(deoxyribonucleotide)m = (deoxyribonucleotide)n+m + AMP + diphosphate.. Functionally, the alpha isoform interacts with DNA-repair protein XRCC1 and can correct defective DNA strand-break repair and sister chromatid exchange following treatment with ionizing radiation and alkylating agents. The beta isoform does not interact with XRCC1 and may be specifically involved in the completion of homologous recombination events that occur during meiotic prophase. This chain is DNA ligase 3 (Lig3), found in Mus musculus (Mouse).